Reading from the N-terminus, the 216-residue chain is Vesicle-associated membrane protein 7A (216 aa).

Residues M1–K189 are Cytoplasmic-facing. In terms of domain architecture, Longin spans I6–L112. In terms of domain architecture, v-SNARE coiled-coil homology spans K126–Q186. The helical; Anchor for type IV membrane protein transmembrane segment at L190–L210 threads the bilayer. Residues K211–I216 are Vesicular-facing.

This sequence belongs to the synaptobrevin family. In terms of assembly, component of the SNARE complex composed of syn7A, syn8A, vamp7A and vti1A.

It is found in the cytoplasmic vesicle. It localises to the secretory vesicle membrane. The protein resides in the golgi apparatus. The protein localises to the trans-Golgi network membrane. Its subcellular location is the late endosome membrane. It is found in the lysosome membrane. It localises to the endoplasmic reticulum membrane. The protein resides in the phagosome membrane. Involved in the targeting and/or fusion of transport vesicles to their target membrane during transport of proteins from the early endosome to the lysosome. Required for heterotypic fusion of late endosomes with lysosomes and homotypic lysosomal fusion. Required for calcium regulated lysosomal exocytosis. This Dictyostelium discoideum (Social amoeba) protein is Vesicle-associated membrane protein 7A.